A 496-amino-acid chain; its full sequence is Ammonium transporter 1 member 2 (496 aa).

11 helical membrane-spanning segments follow: residues 39 to 59 (LLFS…LCAG), 74 to 94 (VLDA…FAFG), 120 to 140 (FFLF…GSIA), 148 to 168 (YLIY…HWIW), 192 to 212 (FAGS…GALI), 236 to 256 (LVVL…PGSF), 274 to 296 (SAVG…TTLF), 307 to 327 (VIDV…GCSV), 331 to 351 (WAAI…NALA), 360 to 380 (LEAA…TALF), and 412 to 432 (IVVI…LFLV).

This sequence belongs to the ammonia transporter channel (TC 1.A.11.2) family. Expressed in exodermis, sclerenchyma, endodermis and pericycle cells of primary root tips.

The protein resides in the membrane. In terms of biological role, ammonium transporter probably involved in ammonium uptake from the soil and ammonium uptake and retrieval in the vascular system. This Oryza sativa subsp. japonica (Rice) protein is Ammonium transporter 1 member 2 (AMT1-2).